The following is a 104-amino-acid chain: Small ribosomal subunit protein uS10 (104 aa).

It belongs to the universal ribosomal protein uS10 family. As to quaternary structure, part of the 30S ribosomal subunit.

Functionally, involved in the binding of tRNA to the ribosomes. This is Small ribosomal subunit protein uS10 from Buchnera aphidicola subsp. Baizongia pistaciae (strain Bp).